We begin with the raw amino-acid sequence, 220 residues long: GTP-binding nuclear protein GSP2/CNR2 (220 aa).

Position 2 is an N-acetylserine (serine 2). Serine 2 carries the phosphoserine modification. In terms of domain architecture, Small GTPase Ran-type spans 10-174; it reads EVPTFKLVLV…LWLARKLAGN (165 aa). Position 21–28 (21–28) interacts with GTP; sequence DGGTGKTT. Residues 40-48 form a switch-I region; that stretch reads KKYIATIGV. Residues glycine 71, 125-128, and 153-155 contribute to the GTP site; these read NKVD and SAK. The switch-II stretch occupies residues 71–87; it reads GQEKFGGLRDGYYINAQ.

Belongs to the small GTPase superfamily. Ran family. As to quaternary structure, found in a nuclear export complex with RanGTP, exportin and pre-miRNA.

The protein localises to the nucleus. Functionally, GTP-binding protein involved in nucleocytoplasmic transport. Required for the import of protein into the nucleus and also for RNA export. Not essential for cell viability. The chain is GTP-binding nuclear protein GSP2/CNR2 (GSP2) from Saccharomyces cerevisiae (strain ATCC 204508 / S288c) (Baker's yeast).